The following is a 281-amino-acid chain: MGFTKQYKIDFDIIDNQIVLSNNYFQKHKGSFRKITGTRFGKVIGISEYETSLKTWANMVKIYEDEFDETLSRAGQVIEPKIRDYVIAKTGFNFHSYDPKEVKWDLFPENPVFGGIPDGEPVDVYGKLAYDTNAPMLEIKTTSCDSLVYKKINGNLKIVFDENGMPIVKKINGKKDSWFDSNGKIVISPAYYCQIGLYLYLRNITKGMFAIAFLEPQDYVHPEWFEAKQRDIRLVPVQIDRKAFEVLTNKAQLWYNSFIRTGKSPQLTSQDWEWLRENGIA.

This is an uncharacterized protein from Mycoplasma pneumoniae (strain ATCC 29342 / M129 / Subtype 1) (Mycoplasmoides pneumoniae).